Reading from the N-terminus, the 454-residue chain is Bifunctional protein GlmU (454 aa).

The interval 1–225 is pyrophosphorylase; it reads MNIVILAAGM…VWETLGVNSK (225 aa). UDP-N-acetyl-alpha-D-glucosamine is bound by residues 6–9, Lys-20, Gln-71, 76–77, 98–100, Gly-135, Glu-150, Asn-165, and Asn-223; these read LAAG, GT, and YGD. Asp-100 is a binding site for Mg(2+). Residue Asn-223 participates in Mg(2+) binding. The tract at residues 226–246 is linker; the sequence is LQLAEVERIHQGNQARRLLEA. The segment at 247-454 is N-acetyltransferase; that stretch reads GVTLLDPARI…WQRPVKQPKQ (208 aa). UDP-N-acetyl-alpha-D-glucosamine is bound by residues Arg-329 and Lys-347. His-359 serves as the catalytic Proton acceptor. Residues Tyr-362 and Asn-373 each contribute to the UDP-N-acetyl-alpha-D-glucosamine site. Acetyl-CoA is bound by residues Ala-376, 382-383, Ser-401, Ala-419, and Arg-436; that span reads NY.

In the N-terminal section; belongs to the N-acetylglucosamine-1-phosphate uridyltransferase family. It in the C-terminal section; belongs to the transferase hexapeptide repeat family. In terms of assembly, homotrimer. The cofactor is Mg(2+).

The protein localises to the cytoplasm. It catalyses the reaction alpha-D-glucosamine 1-phosphate + acetyl-CoA = N-acetyl-alpha-D-glucosamine 1-phosphate + CoA + H(+). The enzyme catalyses N-acetyl-alpha-D-glucosamine 1-phosphate + UTP + H(+) = UDP-N-acetyl-alpha-D-glucosamine + diphosphate. It functions in the pathway nucleotide-sugar biosynthesis; UDP-N-acetyl-alpha-D-glucosamine biosynthesis; N-acetyl-alpha-D-glucosamine 1-phosphate from alpha-D-glucosamine 6-phosphate (route II): step 2/2. It participates in nucleotide-sugar biosynthesis; UDP-N-acetyl-alpha-D-glucosamine biosynthesis; UDP-N-acetyl-alpha-D-glucosamine from N-acetyl-alpha-D-glucosamine 1-phosphate: step 1/1. Its pathway is bacterial outer membrane biogenesis; LPS lipid A biosynthesis. Functionally, catalyzes the last two sequential reactions in the de novo biosynthetic pathway for UDP-N-acetylglucosamine (UDP-GlcNAc). The C-terminal domain catalyzes the transfer of acetyl group from acetyl coenzyme A to glucosamine-1-phosphate (GlcN-1-P) to produce N-acetylglucosamine-1-phosphate (GlcNAc-1-P), which is converted into UDP-GlcNAc by the transfer of uridine 5-monophosphate (from uridine 5-triphosphate), a reaction catalyzed by the N-terminal domain. The sequence is that of Bifunctional protein GlmU from Cupriavidus taiwanensis (strain DSM 17343 / BCRC 17206 / CCUG 44338 / CIP 107171 / LMG 19424 / R1) (Ralstonia taiwanensis (strain LMG 19424)).